Consider the following 246-residue polypeptide: 3-deoxy-manno-octulosonate cytidylyltransferase (246 aa).

Belongs to the KdsB family. In terms of assembly, homodimer.

It localises to the cytoplasm. It carries out the reaction 3-deoxy-alpha-D-manno-oct-2-ulosonate + CTP = CMP-3-deoxy-beta-D-manno-octulosonate + diphosphate. It functions in the pathway nucleotide-sugar biosynthesis; CMP-3-deoxy-D-manno-octulosonate biosynthesis; CMP-3-deoxy-D-manno-octulosonate from 3-deoxy-D-manno-octulosonate and CTP: step 1/1. Its pathway is bacterial outer membrane biogenesis; lipopolysaccharide biosynthesis. Its function is as follows. Activates KDO (a required 8-carbon sugar) for incorporation into bacterial lipopolysaccharide in Gram-negative bacteria. In Escherichia coli, this protein is 3-deoxy-manno-octulosonate cytidylyltransferase (kpsU).